Consider the following 111-residue polypeptide: Ig kappa chain V-III region PC 7940 (111 aa).

The interval 1–23 is framework-1; the sequence is DIVLTQSPASLAVSLGQRATISC. Residues Cys-23 and Cys-92 are joined by a disulfide bond. The complementarity-determining-1 stretch occupies residues 24-38; sequence RASKSVSAFGYSYMH. The segment at 39–53 is framework-2; it reads WYQQKPGQPPKLLIY. The segment at 54 to 60 is complementarity-determining-2; it reads LASNLES. Residues 61 to 92 form a framework-3 region; that stretch reads GVPARFSGSGSGTDFTLNIHPVEEEDAVTYYC. The segment at 93 to 101 is complementarity-determining-3; it reads QHSRELPPT. A framework-4 region spans residues 102–111; that stretch reads FGGGTKLEIK.

This is Ig kappa chain V-III region PC 7940 from Mus musculus (Mouse).